We begin with the raw amino-acid sequence, 342 residues long: Nucleoid-associated protein SO_2177 (342 aa).

Belongs to the YejK family.

It is found in the cytoplasm. Its subcellular location is the nucleoid. In Shewanella oneidensis (strain ATCC 700550 / JCM 31522 / CIP 106686 / LMG 19005 / NCIMB 14063 / MR-1), this protein is Nucleoid-associated protein SO_2177.